Here is a 179-residue protein sequence, read N- to C-terminus: Large ribosomal subunit protein uL5 (179 aa).

It belongs to the universal ribosomal protein uL5 family. As to quaternary structure, part of the 50S ribosomal subunit; part of the 5S rRNA/L5/L18/L25 subcomplex. Contacts the 5S rRNA and the P site tRNA. Forms a bridge to the 30S subunit in the 70S ribosome.

Its function is as follows. This is one of the proteins that bind and probably mediate the attachment of the 5S RNA into the large ribosomal subunit, where it forms part of the central protuberance. In the 70S ribosome it contacts protein S13 of the 30S subunit (bridge B1b), connecting the 2 subunits; this bridge is implicated in subunit movement. Contacts the P site tRNA; the 5S rRNA and some of its associated proteins might help stabilize positioning of ribosome-bound tRNAs. In Carboxydothermus hydrogenoformans (strain ATCC BAA-161 / DSM 6008 / Z-2901), this protein is Large ribosomal subunit protein uL5.